The sequence spans 538 residues: MAKLSVNDLNDFLSPGAVCIKPAQVKKQESKNDIRIDGDAYYEVTKDTGETSELGIASISLNDCLACSGCITSAETVLVNLQSYQEVLKHLESRKSQEILYVSLSPQVRANLAAYYGLSLQEIQAVLEMVFIGKLGFHAILDTNASREIVLQQCAQEFCNSWLQSRAHKNQNQVTNSVVNEHPLIPHSTSQISGVHSNTSSNSGINENAVLPILSSSCPGWICYVEKTHSNLIPNLSRVRSPQQACGRILKDWAVQQFSMQRNDVWHLSLMPCFDKKLEASRDEFSENGVRDVDSVLTPKELVEMFKFLRIDPIELTKNPIPFQQSTDAIPFWYPRITYEEQIGSSSGGYMGYVLSYAAKMLFGIDDVGPYVSMNNKNGDLTEYTLRHPETNEQLISMATCYGFRNIQNLVRRVHGNSSVRKGRVLLKKRVRSNAQNPTEEPSRYDYVEVMACPGGCINGGGQLPFPSVERIVSARDWMQQVEKLYYEPGTRSVDQSAVSYMLEQWVKDPTLTPKFLHTSYRAVQTDNDNPLLLANKW.

Residues cysteine 19, cysteine 64, cysteine 67, cysteine 70, cysteine 218, cysteine 273, cysteine 453, and cysteine 457 each coordinate [4Fe-4S] cluster.

Belongs to the NARF family.

The protein localises to the cytoplasm. It is found in the nucleus. Functionally, component of the cytosolic Fe/S protein assembly machinery. Required for maturation of extramitochondrial Fe/S proteins. May play a role in the transfer of pre-assembled Fe/S clusters to target apoproteins. The protein is Cytosolic Fe-S cluster assembly factor NAR1 homolog of Schizosaccharomyces pombe (strain 972 / ATCC 24843) (Fission yeast).